Here is an 87-residue protein sequence, read N- to C-terminus: Small ribosomal subunit protein bS16 (87 aa).

Belongs to the bacterial ribosomal protein bS16 family.

The polypeptide is Small ribosomal subunit protein bS16 (Aster yellows witches'-broom phytoplasma (strain AYWB)).